A 493-amino-acid chain; its full sequence is Cholesteryl ester transfer protein (493 aa).

Residues 1 to 17 form the signal peptide; that stretch reads MLAATVLTLALLGNVHA. 2 N-linked (GlcNAc...) asparagine glycosylation sites follow: Asn59 and Asn105. A disulfide bridge connects residues Cys160 and Cys201. Asn257, Asn358, and Asn413 each carry an N-linked (GlcNAc...) asparagine glycan.

It belongs to the BPI/LBP/Plunc superfamily. BPI/LBP family. In terms of tissue distribution, probably primarily expressed in liver and adipose tissues. Detected in adrenal gland, mesenteric fat, spleen and aorta.

The protein localises to the secreted. It catalyses the reaction cholesteryl (9Z-octadecenoate)(in) = cholesteryl (9Z-octadecenoate)(out). It carries out the reaction 1,2,3-tri-(9Z-octadecenoyl)-glycerol(in) = 1,2,3-tri-(9Z-octadecenoyl)-glycerol(out). The catalysed reaction is cholesteryl (9Z,12Z)-octadecadienoate(in) = cholesteryl (9Z,12Z)-octadecadienoate(out). In terms of biological role, involved in the transfer of neutral lipids, including cholesteryl ester and triglyceride, among lipoprotein particles. Allows the net movement of cholesteryl ester from high density lipoproteins/HDL to triglyceride-rich very low density lipoproteins/VLDL, and the equimolar transport of triglyceride from VLDL to HDL. Regulates the reverse cholesterol transport, by which excess cholesterol is removed from peripheral tissues and returned to the liver for elimination. The chain is Cholesteryl ester transfer protein from Macaca fascicularis (Crab-eating macaque).